The sequence spans 514 residues: 1-pyrroline-5-carboxylate dehydrogenase (514 aa).

Residues glutamate 286 and cysteine 320 contribute to the active site.

It belongs to the aldehyde dehydrogenase family. RocA subfamily.

It catalyses the reaction L-glutamate 5-semialdehyde + NAD(+) + H2O = L-glutamate + NADH + 2 H(+). The protein operates within amino-acid degradation; L-proline degradation into L-glutamate; L-glutamate from L-proline: step 2/2. The protein is 1-pyrroline-5-carboxylate dehydrogenase of Staphylococcus aureus (strain MRSA252).